A 1385-amino-acid polypeptide reads, in one-letter code: Contactin-associated protein 1 (1385 aa).

Positions 1 to 20 are cleaved as a signal peptide; that stretch reads MMSLRLFSILLATVVSGAWG. The Extracellular segment spans residues 21–1284; the sequence is WGYYGCNEEL…PYYHDDGWIA (1264 aa). The 144-residue stretch at 26–169 folds into the F5/8 type C domain; that stretch reads CNEELVGPLY…IGLRLGIYGC (144 aa). An intrachain disulfide couples cysteine 26 to cysteine 169. N-linked (GlcNAc...) asparagine glycans are attached at residues asparagine 121, asparagine 129, and asparagine 277. Laminin G-like domains follow at residues 204–356 and 390–539; these read FKTE…AFRC and FRTW…FDTC. The cysteines at positions 324 and 356 are disulfide-linked. N-linked (GlcNAc...) asparagine glycans are attached at residues asparagine 421, asparagine 500, and asparagine 519. 4 disulfides stabilise this stretch: cysteine 507–cysteine 539, cysteine 545–cysteine 556, cysteine 550–cysteine 565, and cysteine 567–cysteine 577. In terms of domain architecture, EGF-like 1 spans 545 to 577; that stretch reads CSPNMCEHDGRCYQSWDDFICYCELTGYKGVTC. Residues 577–796 enclose the Fibrinogen C-terminal domain; it reads CHEPLYKESC…NTISFHTGAA (220 aa). Asparagine 598, asparagine 654, asparagine 665, asparagine 764, asparagine 805, asparagine 844, asparagine 861, asparagine 949, and asparagine 957 each carry an N-linked (GlcNAc...) asparagine glycan. The Laminin G-like 3 domain maps to 814–958; the sequence is FRTSAPSGVF…NASEGTFPNC (145 aa). Cystine bridges form between cysteine 931/cysteine 958, cysteine 962/cysteine 975, cysteine 969/cysteine 984, and cysteine 986/cysteine 996. Positions 962 to 996 constitute an EGF-like 2 domain; sequence CTHPRFPCFHGGRCVERYSYYTCDCDLTAFDGPYC. N-linked (GlcNAc...) asparagine glycans are attached at residues asparagine 1079 and asparagine 1148. The Laminin G-like 4 domain maps to 1089-1251; it reads FSTNSAPAVL…VQGELSESNC (163 aa). Cysteine 1210 and cysteine 1251 are oxidised to a cystine. A helical transmembrane segment spans residues 1285–1305; sequence ILLGFLVAFLLLGLVGMLVLF. Over 1306–1385 the chain is Cytoplasmic; that stretch reads YLQNHRYKGS…PQILEESRSE (80 aa). The disordered stretch occupies residues 1317–1385; it reads HTNEPKATHD…PQILEESRSE (69 aa). The segment covering 1319 to 1329 has biased composition (basic and acidic residues); it reads NEPKATHDSHP. A compositionally biased stretch (pro residues) spans 1334-1367; that stretch reads PLPPSGPAQAPAPTPAPTQLPTPAPAPAPAPASG. The SH3-binding signature appears at 1334–1370; the sequence is PLPPSGPAQAPAPTPAPTQLPTPAPAPAPAPASGPGP. Residue serine 1384 is modified to Phosphoserine.

It belongs to the neurexin family. In terms of assembly, interacts with CNTN1/contactin in cis form. As to expression, expressed in brain. In myelinated nerve fibers predominantly found in paranodal axoglial junctions. In the internodal region of myelinated axons in the CNS and the PNS also found as a thin line apposing the inner mesaxon of the myelin sheath. In PNS neurons this line forms a circumferential ring that apposes the innermost aspect of Schmidt-Lanterman incisures.

The protein localises to the membrane. Its subcellular location is the cell junction. It localises to the paranodal septate junction. Required, with CNTNAP2, for radial and longitudinal organization of myelinated axons. Plays a role in the formation of functional distinct domains critical for saltatory conduction of nerve impulses in myelinated nerve fibers. Demarcates the paranodal region of the axo-glial junction. In association with contactin involved in the signaling between axons and myelinating glial cells. The sequence is that of Contactin-associated protein 1 (Cntnap1) from Mus musculus (Mouse).